A 276-amino-acid chain; its full sequence is Energy-coupling factor transporter ATP-binding protein EcfA1 (276 aa).

An ABC transporter domain is found at 2 to 237 (IEIKNLKFKY…GSELVDLGLD (236 aa)). 37 to 44 (GHNGSGKS) is an ATP binding site.

It belongs to the ABC transporter superfamily. Energy-coupling factor EcfA family. In terms of assembly, forms a stable energy-coupling factor (ECF) transporter complex composed of 2 membrane-embedded substrate-binding proteins (S component), 2 ATP-binding proteins (A component) and 2 transmembrane proteins (T component).

Its subcellular location is the cell membrane. Its function is as follows. ATP-binding (A) component of a common energy-coupling factor (ECF) ABC-transporter complex. Unlike classic ABC transporters this ECF transporter provides the energy necessary to transport a number of different substrates. The protein is Energy-coupling factor transporter ATP-binding protein EcfA1 of Streptococcus thermophilus (strain ATCC BAA-491 / LMD-9).